A 360-amino-acid polypeptide reads, in one-letter code: MSDLDTLLMETLAQVAFAADEGELENVRVGALGKKGTISALLATLGKMSPDERKVQGAAINALKDKVNEALAERRLILKEQKLEARLAAEIIDVTLPVLPRPEELGRIHPITQVMDELAAIFAEMGFAIAEGPDIETDDYNFTKLNFPPDHPARDMHDTFFFEPDAQGQRKVLRTHTSPVQVRTMLTQKPPIRVICPGRTYRCDSDQTHTPMFHQVEGLVIDKSAHLGHLKWILEEFCKAFFEVPDVKMRFRPSYFPFTEPSMEVDIQCSRKGGEIRFGEGEDWLEILGCGMVHPNVLRNCGLDPDVYQGFAWGMGIDRIAMLKYGMPDLRAFFEADIRWLNHYGFRPLDMPSLLSGLSS.

E260 serves as a coordination point for Mg(2+).

The protein belongs to the class-II aminoacyl-tRNA synthetase family. Phe-tRNA synthetase alpha subunit type 1 subfamily. As to quaternary structure, tetramer of two alpha and two beta subunits. Requires Mg(2+) as cofactor.

It localises to the cytoplasm. It carries out the reaction tRNA(Phe) + L-phenylalanine + ATP = L-phenylalanyl-tRNA(Phe) + AMP + diphosphate + H(+). In Beijerinckia indica subsp. indica (strain ATCC 9039 / DSM 1715 / NCIMB 8712), this protein is Phenylalanine--tRNA ligase alpha subunit.